Consider the following 168-residue polypeptide: MSRGFYIGRFQPYHNGHQSVLERIARTADEIVIGVGSAQVSHTVANPFTAGERVLMLTRSLEDLDCPFYVIPIEDVQRNALWVAHVRSMTPPFDTVYSSNPLVMQLFAEAGVDVQSPDMYERLTHSGTVIRQRMLGGEPWEHLVPPAVVDVIREIHGVERLQRIAGSD.

The protein belongs to the archaeal NMN adenylyltransferase family.

It is found in the cytoplasm. It catalyses the reaction beta-nicotinamide D-ribonucleotide + ATP + H(+) = diphosphate + NAD(+). It participates in cofactor biosynthesis; NAD(+) biosynthesis; NAD(+) from nicotinamide D-ribonucleotide: step 1/1. This Methanoculleus marisnigri (strain ATCC 35101 / DSM 1498 / JR1) protein is Nicotinamide-nucleotide adenylyltransferase.